Here is a 198-residue protein sequence, read N- to C-terminus: Recombination protein RecR (198 aa).

Residues 57 to 72 (CSSCGHITDKDPCYIC) form a C4-type zinc finger. One can recognise a Toprim domain in the interval 80–175 (SIICVVQDPK…KITRIAHGLP (96 aa)).

Belongs to the RecR family.

Functionally, may play a role in DNA repair. It seems to be involved in an RecBC-independent recombinational process of DNA repair. It may act with RecF and RecO. This chain is Recombination protein RecR, found in Anoxybacillus flavithermus (strain DSM 21510 / WK1).